The sequence spans 171 residues: Small ribosomal subunit protein uS5 (171 aa).

Residues 16–79 enclose the S5 DRBM domain; sequence LIEKIVFINR…ERARKDMALV (64 aa).

The protein belongs to the universal ribosomal protein uS5 family. Part of the 30S ribosomal subunit. Contacts proteins S4 and S8.

Its function is as follows. With S4 and S12 plays an important role in translational accuracy. Located at the back of the 30S subunit body where it stabilizes the conformation of the head with respect to the body. This is Small ribosomal subunit protein uS5 from Desulfotalea psychrophila (strain LSv54 / DSM 12343).